Here is a 376-residue protein sequence, read N- to C-terminus: Bifunctional enzyme IspD/IspF (376 aa).

Residues 1–220 (MRIAAILVAG…RSMSISMIPR (220 aa)) are 2-C-methyl-D-erythritol 4-phosphate cytidylyltransferase. Residues 220–376 (RIGTGYDVHA…QAAVIIMIPA (157 aa)) form a 2-C-methyl-D-erythritol 2,4-cyclodiphosphate synthase region. A divalent metal cation-binding residues include Asp226 and His228. Residues 226-228 (DVH) and 252-253 (HS) contribute to the 4-CDP-2-C-methyl-D-erythritol 2-phosphate site. His260 is an a divalent metal cation binding site. 4-CDP-2-C-methyl-D-erythritol 2-phosphate contacts are provided by residues 274-276 (DIG), 350-353 (TTSE), Phe357, and Arg360.

This sequence in the N-terminal section; belongs to the IspD/TarI cytidylyltransferase family. IspD subfamily. The protein in the C-terminal section; belongs to the IspF family. It depends on a divalent metal cation as a cofactor.

It catalyses the reaction 2-C-methyl-D-erythritol 4-phosphate + CTP + H(+) = 4-CDP-2-C-methyl-D-erythritol + diphosphate. It carries out the reaction 4-CDP-2-C-methyl-D-erythritol 2-phosphate = 2-C-methyl-D-erythritol 2,4-cyclic diphosphate + CMP. It participates in isoprenoid biosynthesis; isopentenyl diphosphate biosynthesis via DXP pathway; isopentenyl diphosphate from 1-deoxy-D-xylulose 5-phosphate: step 2/6. The protein operates within isoprenoid biosynthesis; isopentenyl diphosphate biosynthesis via DXP pathway; isopentenyl diphosphate from 1-deoxy-D-xylulose 5-phosphate: step 4/6. Bifunctional enzyme that catalyzes the formation of 4-diphosphocytidyl-2-C-methyl-D-erythritol from CTP and 2-C-methyl-D-erythritol 4-phosphate (MEP) (IspD), and catalyzes the conversion of 4-diphosphocytidyl-2-C-methyl-D-erythritol 2-phosphate (CDP-ME2P) to 2-C-methyl-D-erythritol 2,4-cyclodiphosphate (ME-CPP) with a corresponding release of cytidine 5-monophosphate (CMP) (IspF). The protein is Bifunctional enzyme IspD/IspF of Granulibacter bethesdensis (strain ATCC BAA-1260 / CGDNIH1).